We begin with the raw amino-acid sequence, 361 residues long: MQTYGNPDPTYGWWVGNSVVTNKSSRFIGSHVAHTGLIAFTAGANTLWELARFNPDIPMGHQGMVSIPHLASLGIGFDQAGAWTGQDVAFVGIFHLICSFVYALAGLLHSVIFSEDTQNSSGLFADGRPEHRQAARFKLEWDNPDNQTFILGHHLVFFGVANIWFVEWARVHGIYDPAIEAIRQVNYNLDLTQIWNHQFDFIQIDSLEDVMGGHAFLAFFQIGGGAFHIATKQIGTYTNFKGAGLLSAEAVLSWSLAGIGWMAIIAAFWCATNTTVYPEAWYGETLQLKFGISPYWIDTGNMDGVVTGHTSRAWLSNVHYYLGFFFIQGHLWHAIRAMGFDFRKVTSAVANLDNSRITLSD.

The next 6 helical transmembrane spans lie at 27-47, 88-108, 149-169, 210-230, 250-270, and 315-335; these read FIGSHVAHTGLIAFTAGANTL, VAFVGIFHLICSFVYALAGLL, FILGHHLVFFGVANIWFVEWA, VMGGHAFLAFFQIGGGAFHIA, AVLSWSLAGIGWMAIIAAFWC, and LSNVHYYLGFFFIQGHLWHAI.

Belongs to the PsbB/PsbC family. IsiA/Pcb subfamily. The antenna complex consists of divinyl chlorophylls (a and b) and divinyl chlorophyll a/b binding proteins and binds more divinyl chlorophyll b than does the antenna complex from high-light-adapted Prochlorococcus. It depends on divinyl chlorophyll a as a cofactor. Divinyl chlorophyll b is required as a cofactor.

It is found in the cellular thylakoid membrane. Its function is as follows. The antenna complex functions as a light receptor, it captures and delivers excitation energy to photosystems II and I. The Prochlorales pcb genes are not related to higher plant LHCs. The sequence is that of Divinyl chlorophyll a/b light-harvesting protein PcbE (pcbE) from Prochlorococcus marinus (strain SARG / CCMP1375 / SS120).